Reading from the N-terminus, the 533-residue chain is ATP synthase F(1) complex catalytic subunit beta, mitochondrial (533 aa).

The N-terminal 53 residues, 1 to 53 (MLGLAGRCSAAAASAARPALRRAAGPSHGFLPLLLSRGAGPAAAVGARRDHAA), are a transit peptide targeting the mitochondrion. Gly-214, Val-215, Gly-216, Lys-217, Thr-218, and Val-219 together coordinate ADP. Gly-214 contacts ATP. Positions 214, 215, 216, 217, and 218 each coordinate phosphate. 4 residues coordinate ATP: Gly-216, Lys-217, Thr-218, and Val-219. Thr-218 is a binding site for Mg(2+). A Mg(2+)-binding site is contributed by Glu-243. An ATP-binding site is contributed by Arg-244.

As to quaternary structure, homotrimer. Component of the ATP synthase complex composed at least of ATP5F1A/subunit alpha, ATP5F1B/subunit beta, ATP5MC1/subunit c (homooctomer), MT-ATP6/subunit a, MT-ATP8/subunit 8, ATP5ME/subunit e, ATP5MF/subunit f, ATP5MG/subunit g, ATP5MK/subunit k, ATP5MJ/subunit j, ATP5F1C/subunit gamma, ATP5F1D/subunit delta, ATP5F1E/subunit epsilon, ATP5PF/subunit F6, ATP5PB/subunit b, ATP5PD/subunit d, ATP5PO/subunit OSCP. ATP synthase complex consists of a soluble F(1) head domain (subunits alpha(3) and beta(3)) - the catalytic core - and a membrane F(0) domain - the membrane proton channel (subunits c, a, 8, e, f, g, k and j). These two domains are linked by a central stalk (subunits gamma, delta, and epsilon) rotating inside the F1 region and a stationary peripheral stalk (subunits F6, b, d, and OSCP).

It is found in the mitochondrion inner membrane. It catalyses the reaction ATP + H2O + 4 H(+)(in) = ADP + phosphate + 5 H(+)(out). In terms of biological role, catalytic subunit beta, of the mitochondrial membrane ATP synthase complex (F(1)F(0) ATP synthase or Complex V) that produces ATP from ADP in the presence of a proton gradient across the membrane which is generated by electron transport complexes of the respiratory chain. ATP synthase complex consist of a soluble F(1) head domain - the catalytic core - and a membrane F(1) domain - the membrane proton channel. These two domains are linked by a central stalk rotating inside the F(1) region and a stationary peripheral stalk. During catalysis, ATP synthesis in the catalytic domain of F(1) is coupled via a rotary mechanism of the central stalk subunits to proton translocation. In vivo, can only synthesize ATP although its ATP hydrolase activity can be activated artificially in vitro. With the subunit alpha (ATP5F1A), forms the catalytic core in the F(1) domain. This Gallus gallus (Chicken) protein is ATP synthase F(1) complex catalytic subunit beta, mitochondrial.